The primary structure comprises 230 residues: Androgen-dependent TFPI-regulating protein (230 aa).

At 1-7 (MTKTTTC) the chain is on the cytoplasmic side. The chain crosses the membrane as a helical span at residues 8 to 28 (VYHFLVLNWYIFLNYHIPQIG). The Extracellular portion of the chain corresponds to 29–45 (RNEEKLREFHDGGRSKY). Residues 46-66 (LTLLNLLLQAIFFGVACLDDV) form a helical membrane-spanning segment. At 67–85 (LKRVIGRKDIKFVTSFRDL) the chain is on the cytoplasmic side. Residues 86–106 (LFTTMAFPISTFVFLVFWTLF) form a helical membrane-spanning segment. Topologically, residues 107 to 120 (HYDRSLVYPKGLDD) are extracellular. A helical membrane pass occupies residues 121–141 (FFPAWVNHAMHTSIFPFSLFE). The Cytoplasmic segment spans residues 142–154 (TILRPHNYPSKKL). A helical membrane pass occupies residues 155–175 (GLTLLGAFNFAYIIRILWRYV). Topologically, residues 176 to 190 (QTGNWVYPVFDSLSP) are extracellular. A helical transmembrane segment spans residues 191–211 (LGIIIFFSAAYILVAGIYLFG). Residues 212–230 (EKINHWKWGAIAKPQMKKN) are Cytoplasmic-facing.

The protein belongs to the AIG1 family.

It is found in the cell membrane. The enzyme catalyses 9-hexadecanoyloxy-octadecanoate + H2O = 9-hydroxy-octadecanoate + hexadecanoate + H(+). The catalysed reaction is 12-hexadecanoyloxy-octadecanoate + H2O = 12-hydroxyoctadecanoate + hexadecanoate + H(+). It catalyses the reaction 9-(9Z-hexadecenoyloxy)-octadecanoate + H2O = (9Z)-hexadecenoate + 9-hydroxy-octadecanoate + H(+). It carries out the reaction 12-(9Z-hexadecenoyloxy)-octadecanoate + H2O = 12-hydroxyoctadecanoate + (9Z)-hexadecenoate + H(+). The enzyme catalyses 13-(9Z-hexadecenoyloxy)-octadecanoate + H2O = 13-hydroxy-octadecanoate + (9Z)-hexadecenoate + H(+). The catalysed reaction is 9-octadecanoyloxy-octadecanoate + H2O = 9-hydroxy-octadecanoate + octadecanoate + H(+). It catalyses the reaction 12-octadecanoyloxy-octadecanoate + H2O = 12-hydroxyoctadecanoate + octadecanoate + H(+). It carries out the reaction 13-octadecanoyloxy-octadecanoate + H2O = 13-hydroxy-octadecanoate + octadecanoate + H(+). The enzyme catalyses 9-(9Z-octadecenoyloxy)-octadecanoate + H2O = 9-hydroxy-octadecanoate + (9Z)-octadecenoate + H(+). The catalysed reaction is 12-(9Z-octadecenoyloxy)-octadecanoate + H2O = 12-hydroxyoctadecanoate + (9Z)-octadecenoate + H(+). It catalyses the reaction 13-(9Z-octadecenoyloxy)-octadecanoate + H2O = 13-hydroxy-octadecanoate + (9Z)-octadecenoate + H(+). It carries out the reaction 5-(9Z-octadecenoyloxy)-octadecanoate + H2O = 5-hydroxy-octadecanoate + (9Z)-octadecenoate + H(+). Hydrolyzes bioactive fatty-acid esters of hydroxy-fatty acids (FAHFAs), but not other major classes of lipids. Shows a preference for FAHFAs with branching distal from the carboxylate head group of the lipids. Regulates the expression and the cell-associated anticoagulant activity of the inhibitor TFPI in endothelial cells (in vitro). This Mus musculus (Mouse) protein is Androgen-dependent TFPI-regulating protein (Adtrp).